We begin with the raw amino-acid sequence, 172 residues long: Ribosome maturation factor RimM (172 aa).

The PRC barrel domain maps to E96 to L168.

It belongs to the RimM family. As to quaternary structure, binds ribosomal protein uS19.

The protein localises to the cytoplasm. In terms of biological role, an accessory protein needed during the final step in the assembly of 30S ribosomal subunit, possibly for assembly of the head region. Essential for efficient processing of 16S rRNA. May be needed both before and after RbfA during the maturation of 16S rRNA. It has affinity for free ribosomal 30S subunits but not for 70S ribosomes. This Streptococcus pyogenes serotype M6 (strain ATCC BAA-946 / MGAS10394) protein is Ribosome maturation factor RimM.